The sequence spans 947 residues: Bifunctional glutamine synthetase adenylyltransferase/adenylyl-removing enzyme (947 aa).

Residues 1–440 form an adenylyl removase region; it reads MTPLSSPLSQ…VFNELIGDDE (440 aa). The adenylyl transferase stretch occupies residues 450–947; the sequence is SEPWREVWQD…ASWRKWLVAV (498 aa).

It belongs to the GlnE family. Mg(2+) serves as cofactor.

The catalysed reaction is [glutamine synthetase]-O(4)-(5'-adenylyl)-L-tyrosine + phosphate = [glutamine synthetase]-L-tyrosine + ADP. The enzyme catalyses [glutamine synthetase]-L-tyrosine + ATP = [glutamine synthetase]-O(4)-(5'-adenylyl)-L-tyrosine + diphosphate. Its function is as follows. Involved in the regulation of glutamine synthetase GlnA, a key enzyme in the process to assimilate ammonia. When cellular nitrogen levels are high, the C-terminal adenylyl transferase (AT) inactivates GlnA by covalent transfer of an adenylyl group from ATP to specific tyrosine residue of GlnA, thus reducing its activity. Conversely, when nitrogen levels are low, the N-terminal adenylyl removase (AR) activates GlnA by removing the adenylyl group by phosphorolysis, increasing its activity. The regulatory region of GlnE binds the signal transduction protein PII (GlnB) which indicates the nitrogen status of the cell. This Salmonella typhimurium (strain LT2 / SGSC1412 / ATCC 700720) protein is Bifunctional glutamine synthetase adenylyltransferase/adenylyl-removing enzyme.